Reading from the N-terminus, the 235-residue chain is tRNA (guanine-N(1)-)-methyltransferase (235 aa).

S-adenosyl-L-methionine-binding positions include Gly-112 and 132-137; that span reads IGDYVL.

It belongs to the RNA methyltransferase TrmD family. Homodimer.

Its subcellular location is the cytoplasm. The enzyme catalyses guanosine(37) in tRNA + S-adenosyl-L-methionine = N(1)-methylguanosine(37) in tRNA + S-adenosyl-L-homocysteine + H(+). In terms of biological role, specifically methylates guanosine-37 in various tRNAs. The polypeptide is tRNA (guanine-N(1)-)-methyltransferase (Cytophaga hutchinsonii (strain ATCC 33406 / DSM 1761 / CIP 103989 / NBRC 15051 / NCIMB 9469 / D465)).